We begin with the raw amino-acid sequence, 1434 residues long: Protein patched homolog 1 (1434 aa).

The segment covering 1–13 has biased composition (low complexity); that stretch reads MASAGNAAGALGR. The tract at residues 1–34 is disordered; it reads MASAGNAAGALGRQAGGGRRRRTGGPHRAAPDRD. The Cytoplasmic segment spans residues 1–86; that stretch reads MASAGNAAGA…GCYIQKNCGK (86 aa). A helical transmembrane segment spans residues 87–107; sequence FLVVGLLIFGAFAVGLKAANL. Over 108 to 422 the chain is Extracellular; that stretch reads ETNVEELWVE…LDDILKSFSD (315 aa). 4 N-linked (GlcNAc...) asparagine glycosylation sites follow: Asn127, Asn298, Asn335, and Asn400. The helical transmembrane segment at 423-443 threads the bilayer; that stretch reads VSVIRVASGYLLMLAYACLTM. The SSD domain maps to 424-584; the sequence is SVIRVASGYL…LLIFPAILSM (161 aa). Residues 444–458 lie on the Cytoplasmic side of the membrane; it reads LRWDCSKSQGAVGLA. Residues 459–479 form a helical membrane-spanning segment; it reads GVLLVALSVAAGLGLCSLIGI. At 480–487 the chain is on the extracellular side; sequence SFNAATTQ. Residues 488–508 traverse the membrane as a helical segment; sequence VLPFLALGVGVDDVFLLAHAF. Residues 509–533 are Cytoplasmic-facing; that stretch reads SETGQNKRIPFEDRTGECLKRTGAS. Residues 534–554 traverse the membrane as a helical segment; it reads VALTSISNVTAFFMAALIPIP. Residues 555-563 are Extracellular-facing; the sequence is ALRAFSLQA. The chain crosses the membrane as a helical span at residues 564 to 584; it reads AVVVVFNFAMVLLIFPAILSM. Residues 585-734 are Cytoplasmic-facing; sequence DLYRREDRRL…HYAPFLLKPK (150 aa). A helical transmembrane segment spans residues 735–755; that stretch reads AKVVVILLFLGLLGVSLYGTT. Residues 756–1013 are Extracellular-facing; sequence RVRDGLDLTD…WEQYISLRHW (258 aa). N-linked (GlcNAc...) asparagine glycosylation is found at Asn861 and Asn986. A helical transmembrane segment spans residues 1014–1034; sequence LLLSISVVLACTFLVCAVFLL. At 1035–1039 the chain is on the cytoplasmic side; the sequence is NPWTA. A helical membrane pass occupies residues 1040–1060; sequence GIIVMVLALMTVELFGMMGLI. The Extracellular segment spans residues 1061 to 1069; sequence GIKLSAVPV. Residues 1070 to 1090 traverse the membrane as a helical segment; that stretch reads VILIASVGIGVEFTVHVALAF. The Cytoplasmic portion of the chain corresponds to 1091–1107; sequence LTAIGDKNHRAMLALEH. A helical membrane pass occupies residues 1108–1128; sequence MFAPVLDGAVSTLLGVLMLAG. Residues 1129–1140 lie on the Extracellular side of the membrane; that stretch reads SEFDFIVRYFFA. A helical transmembrane segment spans residues 1141–1161; the sequence is VLAILTVLGVLNGLVLLPVLL. Over 1162–1434 the chain is Cytoplasmic; it reads SFFGPCPEVS…EERPWGSSSN (273 aa). 3 disordered regions span residues 1175 to 1219, 1257 to 1348, and 1368 to 1396; these read GLNR…TVSG, HPDS…SSVP, and HPPP…HGVF. Phosphothreonine is present on Thr1181. Ser1183 carries the phosphoserine modification. Low complexity predominate over residues 1204–1213; the sequence is SDSSDSEYSS. Residues 1288–1297 show a composition bias toward basic and acidic residues; it reads PRRDPPREGL. Residues 1335–1348 are compositionally biased toward polar residues; that stretch reads PRNPTSTAMGSSVP. Lys1413 participates in a covalent cross-link: Glycyl lysine isopeptide (Lys-Gly) (interchain with G-Cter in ubiquitin).

This sequence belongs to the patched family. As to quaternary structure, interacts with SNX17. Interacts with IHH. Interacts with G-protein coupled receptor GPR37L1. In terms of processing, glycosylation is necessary for SHH binding. Post-translationally, in the absence of Hh ligands, ubiquitination by ITCH at Lys-1413 promotes endocytosis and both proteasomal and lysosomal degradation. In terms of tissue distribution, detected in cerebellar Bergmann glia cells (at protein level). In the developing embryo, first detected within the ventral neural tube and later in the somites and limb buds. Expression in the limb buds is restricted to the posterior ectoderm surrounding the zone of polarizing activity. In the adult, expression is seen in brain, lung, liver, kidney and ocular tissues; lower levels in heart, skeletal muscle, and testis.

It is found in the cell membrane. Its function is as follows. Acts as a receptor for sonic hedgehog (SHH), indian hedgehog (IHH) and desert hedgehog (DHH). Associates with the smoothened protein (SMO) to transduce the hedgehog's proteins signal. Seems to have a tumor suppressor function, as inactivation of this protein is probably a necessary, if not sufficient step for tumorigenesis. The chain is Protein patched homolog 1 (Ptch1) from Mus musculus (Mouse).